We begin with the raw amino-acid sequence, 382 residues long: Gap junction alpha-1 protein (382 aa).

The Cytoplasmic portion of the chain corresponds to G2–K23. S5 carries the phosphoserine modification. A helical membrane pass occupies residues V24–A44. Residues W45 to R76 are Extracellular-facing. 2 disulfides stabilise this stretch: C54-C192 and C187-C198. Residues F77–F97 traverse the membrane as a helical segment. Over Y98 to Y155 the chain is Cytoplasmic. A Glycyl lysine isopeptide (Lys-Gly) (interchain with G-Cter in SUMO) cross-link involves residue K144. Residues I156 to I176 form a helical membrane-spanning segment. Over Y177–T207 the chain is Extracellular. A helical transmembrane segment spans residues I208–L228. The Cytoplasmic segment spans residues F229–I382. K237 is covalently cross-linked (Glycyl lysine isopeptide (Lys-Gly) (interchain with G-Cter in SUMO)). An interaction with NOV region spans residues S244–I382. Residue Y247 is modified to Phosphotyrosine. 3 positions are modified to phosphoserine: S255, S257, and S262. The interval K264–I382 is interaction with UBQLN4. C271 carries the post-translational modification S-nitrosocysteine. T275 is modified (phosphothreonine). S306 and S314 each carry phosphoserine. A compositionally biased stretch (polar residues) spans Q317–A332. A disordered region spans residues Q317–I382. S325 is subject to Phosphoserine; by CK1. Residue T326 is modified to Phosphothreonine. 2 positions are modified to phosphoserine; by CK1: S328 and S330. 2 positions are modified to phosphoserine: S344 and S365. Low complexity predominate over residues R362 to R374. S368 bears the Phosphoserine; by PKC/PRKCG and PKC/PRKCD mark. Residues S369 and S373 each carry the phosphoserine modification.

This sequence belongs to the connexin family. Alpha-type (group II) subfamily. A connexon is composed of a hexamer of connexins. Interacts with SGSM3. Interacts with RIC1/CIP150. Interacts with CNST and CSNK1D. Interacts (via C-terminus) with TJP1. Interacts (via C-terminus) with SRC (via SH3 domain). Interacts (not ubiquitinated) with UBQLN4 (via UBA domain). Interacts with NOV. Interacts with TMEM65. Interacts with ANK3/ANKG and PKP2. Post-translationally, phosphorylation at Ser-325, Ser-328 and Ser-330 by CK1 modulates gap junction assembly. Phosphorylated at Ser-368 by PRKCG; phosphorylation induces disassembly of gap junction plaques and inhibition of gap junction activity. Phosphorylation at Ser-368 by PRKCD triggers its internalization into small vesicles leading to proteasome-mediated degradation. In terms of processing, sumoylated with SUMO1, SUMO2 and SUMO3, which may regulate the level of functional Cx43 gap junctions at the plasma membrane. May be desumoylated by SENP1 or SENP2. S-nitrosylation at Cys-271 is enriched at the muscle endothelial gap junction in arteries, it augments channel permeability and may regulate of smooth muscle cell to endothelial cell communication. Post-translationally, acetylated in the developing cortex; leading to delocalization from the cell membrane.

The protein localises to the cell membrane. It localises to the cell junction. Its subcellular location is the gap junction. The protein resides in the endoplasmic reticulum. Functionally, gap junction protein that acts as a regulator of bladder capacity. A gap junction consists of a cluster of closely packed pairs of transmembrane channels, the connexons, through which materials of low MW diffuse from one cell to a neighboring cell. May play a critical role in the physiology of hearing by participating in the recycling of potassium to the cochlear endolymph. Negative regulator of bladder functional capacity: acts by enhancing intercellular electrical and chemical transmission, thus sensitizing bladder muscles to cholinergic neural stimuli and causing them to contract. May play a role in cell growth inhibition through the regulation of NOV expression and localization. Plays an essential role in gap junction communication in the ventricles. In Ursus americanus (American black bear), this protein is Gap junction alpha-1 protein (GJA1).